A 536-amino-acid polypeptide reads, in one-letter code: Caspase recruitment domain-containing protein 9 (536 aa).

A Phosphoserine modification is found at S2. The Zn(2+) site is built by D3, C10, and H73. One can recognise a CARD domain in the interval 6–98; sequence NDDECWSTLE…QLYRKVTGKE (93 aa). Positions 99–116 are linker; sequence PARVFSMIIDASGESGLT. Residues 117 to 272 adopt a coiled-coil conformation; the sequence is QLLMTEVMKL…ELQVSVQEGK (156 aa). K125 participates in a covalent cross-link: Glycyl lysine isopeptide (Lys-Gly) (interchain with G-Cter in ubiquitin). Phosphothreonine; by PKC/PRKCD is present on T231. S277 bears the Phosphoserine mark. The stretch at 303 to 415 forms a coiled coil; sequence SLRKDLRQAE…LLAAEGRLKQ (113 aa). Phosphoserine occurs at positions 424, 425, 431, 451, 461, 483, and 498. Positions 425-451 are disordered; the sequence is SDLEDSSPRNSQELSLPQDLEEDAQLS. The disordered stretch occupies residues 476–536; it reads LTHGMGPSSS…GSDNTDTEGS (61 aa). A compositionally biased stretch (basic and acidic residues) spans 487–502; the sequence is PPEKERRRLKESFENY. T531 and T533 each carry phosphothreonine; by CK2.

As to quaternary structure, monomer. Homodimer; homodimerization is mediated by the CARD domain which forms an extensive interaction with the adjacent linker and coiled-coil regions; leads to an autoinhibited state. Homomultimer; polymerizes following activation, forming a nucleating helical template that seeds BCL10-filament formation via a CARD-CARD interaction. Interacts (via CARD domain) with BCL10 (via CARD domain); interaction takes place following CARD9 activation and polymerization, leading to the formation of a filamentous CBM complex assembly. Component of a CBM complex (CARD9-BCL10, MALT1), composed of CARD9, BCL10 and MALT1. Interacts with RASGRF1. Interacts with NOD2 (via NACHT domain); interaction is direct. Interacts with RIPK2. Interacts with VHL; without leading to protein degradation. Phosphorylated at Thr-231 by PRKCD downstream of C-type lectin receptors activation: phosphorylation promotes interaction with BCL10, followed by activation of NF-kappa-B and MAP kinase p38 pathways. Phosphorylated at Thr-531 and Thr-531 by CK2 following interaction with VHL, leading to inhibit the ability to activate NF-kappa-B. In terms of processing, ubiquitinated at Lys-125 via 'Lys-27'-linked ubiquitin by TRIM62 downstream of C-type lectin receptors activation; leading to CARD9 activation, followed by activation of NF-kappa-B and MAP kinase p38 pathways. Deubiquitinated at Lys-125 by USP15, inhibiting CARD9. As to expression, specifically expressed in myeloid cells. Not expressed in non-lymphoid organs.

The protein localises to the cytoplasm. Its activity is regulated as follows. Maintained in an autoinhibited state via homodimerization in which the CARD domain forms an extensive interaction with the adjacent linker and coiled-coil regions. Activation downstream of C-type lectin receptors, by phosphorylation by PRKCD and/or ubiquitination by TRIM62, triggers disruption of the CARD domain-coiled coil interface, CARD9 homooligomerization and BCL10 recruitment, followed by activation of NF-kappa-B and MAP kinase p38 pathways. Zinc-binding inhibits activation by stabilizing the CARD ground-state conformation and restricting its capacity to form BCL10-nucleating filaments. Its function is as follows. Adapter protein that plays a key role in innate immune response against fungi by forming signaling complexes downstream of C-type lectin receptors. CARD9-mediated signals are essential for antifungal immunity against a subset of fungi from the phylum Ascomycota. Transduces signals in myeloid cells downstream of C-type lectin receptors CLEC7A (dectin-1), CLEC6A (dectin-2) and CLEC4E (Mincle), which detect pathogen-associated molecular pattern metabolites (PAMPs), such as fungal carbohydrates, and trigger CARD9 activation. Upon activation, CARD9 homooligomerizes to form a nucleating helical template that recruits BCL10 via CARD-CARD interaction, thereby promoting polymerization of BCL10 and subsequent recruitment of MALT1: this leads to activation of NF-kappa-B and MAP kinase p38 (MAPK11, MAPK12, MAPK13 and/or MAPK14) pathways which stimulate expression of genes encoding pro-inflammatory cytokines and chemokines. CARD9 signaling in antigen-presenting cells links innate sensing of fungi to the activation of adaptive immunity and provides a cytokine milieu that induces the development and subsequent of interleukin 17-producing T helper (Th17) cells. Also involved in activation of myeloid cells via classical ITAM-associated receptors and TLR: required for TLR-mediated activation of MAPK, while it is not required for TLR-induced activation of NF-kappa-B. CARD9 can also be engaged independently of BCL10: forms a complex with RASGRF1 downstream of C-type lectin receptors, which recruits and activates HRAS, leading to ERK activation and the production of cytokines. Acts as an important regulator of the intestinal commensal fungi (mycobiota) component of the gut microbiota. Plays an essential role in antifungal immunity against dissemination of gut fungi: acts by promoting induction of antifungal IgG antibodies response in CX3CR1(+) macrophages to confer protection against disseminated C.albicans or C.auris infection. Also mediates immunity against other pathogens, such as certain bacteria, viruses and parasites; CARD9 signaling is however redundant with other innate immune responses. In response to L.monocytogenes infection, required for the production of inflammatory cytokines activated by intracellular peptidoglycan: acts by connecting NOD2 recognition of peptidoglycan to downstream activation of MAP kinases (MAPK) without activating NF-kappa-B. This is Caspase recruitment domain-containing protein 9 from Mus musculus (Mouse).